Here is a 321-residue protein sequence, read N- to C-terminus: NADPH-dependent D-xylose reductase (321 aa).

The Proton donor role is filled by Y50. H112 is a substrate binding site. Residues 167-168 (SN), 216-225 (SSFGPQSFVE), and 272-282 (KSNKKERLLGN) each bind NADP(+).

This sequence belongs to the aldo/keto reductase family.

The catalysed reaction is xylitol + NAD(+) = D-xylose + NADH + H(+). It carries out the reaction xylitol + NADP(+) = D-xylose + NADPH + H(+). The protein operates within carbohydrate metabolism; D-xylose degradation. Reduces D-xylose into xylitol. Preferentially utilizes NADPH as a cosubstrate. The polypeptide is NADPH-dependent D-xylose reductase (XYL1) (Candida boidinii (Yeast)).